A 239-amino-acid polypeptide reads, in one-letter code: Purine nucleoside phosphorylase DeoD-type (239 aa).

Residue His-5 coordinates a purine D-ribonucleoside. Phosphate contacts are provided by residues Gly-21, Arg-25, Arg-44, and 88–91 (RVGS). Residues 180 to 182 (EME) and 204 to 205 (SD) each bind a purine D-ribonucleoside. The active-site Proton donor is the Asp-205.

The protein belongs to the PNP/UDP phosphorylase family. Homohexamer; trimer of homodimers.

It catalyses the reaction a purine D-ribonucleoside + phosphate = a purine nucleobase + alpha-D-ribose 1-phosphate. The catalysed reaction is a purine 2'-deoxy-D-ribonucleoside + phosphate = a purine nucleobase + 2-deoxy-alpha-D-ribose 1-phosphate. Functionally, catalyzes the reversible phosphorolytic breakdown of the N-glycosidic bond in the beta-(deoxy)ribonucleoside molecules, with the formation of the corresponding free purine bases and pentose-1-phosphate. This Myxococcus xanthus (strain DK1622) protein is Purine nucleoside phosphorylase DeoD-type.